Reading from the N-terminus, the 132-residue chain is D-ribose pyranase (132 aa).

The active-site Proton donor is the His20. Substrate contacts are provided by residues Asp28, His99, and 121-123; that span reads YSN.

It belongs to the RbsD / FucU family. RbsD subfamily. In terms of assembly, homodecamer.

It localises to the cytoplasm. The catalysed reaction is beta-D-ribopyranose = beta-D-ribofuranose. It participates in carbohydrate metabolism; D-ribose degradation; D-ribose 5-phosphate from beta-D-ribopyranose: step 1/2. Its function is as follows. Catalyzes the interconversion of beta-pyran and beta-furan forms of D-ribose. This Streptococcus agalactiae serotype III (strain NEM316) protein is D-ribose pyranase.